A 467-amino-acid polypeptide reads, in one-letter code: Cytochrome c-552 (467 aa).

Residues 1–27 form the signal peptide; that stretch reads MMKKMTGKSFALSALVAASFMAAGAMA. His-87 contributes to the heme c binding site. 3 residues coordinate heme: Cys-115, Cys-118, and Lys-119. Positions 153, 156, 157, 195, 198, and 199 each coordinate heme c. Ca(2+) contacts are provided by Glu-201, Tyr-202, Lys-250, and Gln-252. Tyr-202 is a substrate binding site. His-253 serves as a coordination point for substrate. Positions 264, 271, 274, 275, 290, 303, 306, 307, and 382 each coordinate heme c.

The protein belongs to the cytochrome c-552 family. It depends on Ca(2+) as a cofactor. Heme c is required as a cofactor.

The protein localises to the periplasm. The enzyme catalyses 6 Fe(III)-[cytochrome c] + NH4(+) + 2 H2O = 6 Fe(II)-[cytochrome c] + nitrite + 8 H(+). It functions in the pathway nitrogen metabolism; nitrate reduction (assimilation). Its function is as follows. Catalyzes the reduction of nitrite to ammonia, consuming six electrons in the process. The chain is Cytochrome c-552 from Shewanella sp. (strain MR-4).